Here is a 771-residue protein sequence, read N- to C-terminus: MSSSRRRKSFTSSSSSSSPSFHSPPPTSRLRPRSPPSSNTKTSPTSTTPLATNILLSLIAFRLVNAFTVRTFFQPDEFFQSLEPAWQIAFGENQGAWITWEWRHQLRSSIHPLLFAAVYSAADVVAQLLRLSLASRADLLVAAPKTAQAVIAGLGDFYTWKLARYVYGARSYEAWATLALTVVSPWQWFCSTRTLSNCLETTITIVALYLWPWSWSFETPVRKKATRAASRERAQRGPEGSDSLQRLRQCLSLAAVACILRPTNILIWMGLASVAWFRTSWDRRAILVREVLLCGCAVLGLSCVVDRLFYGSWTFPPLRFLYFNIAQSLAVFYGRNDWHYYVSQGFPLLLTTALPFALVGLYRALAQVRTFGLGHLQSLVQAQLALICVIMPFVLSLVSHKEVRFIYPLLPSLHILSAPPLVDYFLPAVIRSSRSYTPRRLTLIFLLLVNIVIALYTTIYHASGPSNILSYLRQQHELHAPAAQTPSNLRPSVKDPSPHGITAGFLMPCHSTPWRSHLIYPTIHAWALTCEPPVDQTAAQKATYIDEADQFYANPARFLREHMAGGLRHISRKPSYLSAQPRPQHPSTTSTNDASHEWPDYLIFFAQLEPTLQSLLRASSYAECYRTFNTAWHDDWRRKGDIVAWCLDPAEQQAWRSATRQRDLENRERQFDRIIESFRKEASGKRDGKLSPFRRWFSSSSSVAPSSSLSLSWPTSWRWPWGQRKRTAWLGVQIPQWTRTRPSWTAWGGDWFGGWRQKKKTKKLLERDLWS.

The interval 1 to 47 (MSSSRRRKSFTSSSSSSSPSFHSPPPTSRLRPRSPPSSNTKTSPTST) is disordered. Composition is skewed to low complexity over residues 10–21 (FTSSSSSSSPSF) and 36–47 (PSSNTKTSPTST). 7 consecutive transmembrane segments (helical) span residues 49–69 (PLATNILLSLIAFRLVNAFTV), 251–271 (LSLAAVACILRPTNILIWMGL), 285–305 (AILVREVLLCGCAVLGLSCVV), 341–361 (YVSQGFPLLLTTALPFALVGL), 378–398 (SLVQAQLALICVIMPFVLSLV), 410–430 (LPSLHILSAPPLVDYFLPAVI), and 441–461 (LTLIFLLLVNIVIALYTTIYH). The tract at residues 575–594 (SYLSAQPRPQHPSTTSTNDA) is disordered.

This sequence belongs to the glycosyltransferase 22 family. PIGB subfamily.

It localises to the endoplasmic reticulum membrane. The protein operates within glycolipid biosynthesis; glycosylphosphatidylinositol-anchor biosynthesis. In terms of biological role, mannosyltransferase involved in glycosylphosphatidylinositol-anchor biosynthesis. Transfers the third mannose to Man2-GlcN-acyl-PI during GPI precursor assembly. The sequence is that of GPI mannosyltransferase 3 (gpi10) from Aspergillus fumigatus (strain ATCC MYA-4609 / CBS 101355 / FGSC A1100 / Af293) (Neosartorya fumigata).